Reading from the N-terminus, the 369-residue chain is Epoxyqueuosine reductase (369 aa).

Residue aspartate 135 is the Proton donor of the active site. Residues isoleucine 177–valine 209 enclose the 4Fe-4S ferredoxin-type domain. [4Fe-4S] cluster is bound by residues cysteine 189, cysteine 192, cysteine 195, cysteine 199, cysteine 215, cysteine 242, cysteine 245, and cysteine 249.

It belongs to the QueG family. In terms of assembly, monomer. Requires cob(II)alamin as cofactor. The cofactor is [4Fe-4S] cluster.

It localises to the cytoplasm. It carries out the reaction epoxyqueuosine(34) in tRNA + AH2 = queuosine(34) in tRNA + A + H2O. It functions in the pathway tRNA modification; tRNA-queuosine biosynthesis. Catalyzes the conversion of epoxyqueuosine (oQ) to queuosine (Q), which is a hypermodified base found in the wobble positions of tRNA(Asp), tRNA(Asn), tRNA(His) and tRNA(Tyr). The chain is Epoxyqueuosine reductase from Vibrio cholerae serotype O1 (strain ATCC 39315 / El Tor Inaba N16961).